A 62-amino-acid chain; its full sequence is Antitoxin VbhA (62 aa).

The Inhibitory (S/T)XXXE(G/N) motif signature appears at 20 to 25; it reads SQRLEG. Glutamate 24 is an ATP binding site.

As to quaternary structure, interacts with VbhT.

Its function is as follows. Antitoxin component of type II toxin-antitoxin (TA) system VbhT-VbhA. Acts by inhibiting the adenylyltransferase activity of VbhT; competes with ATP-binding and prevents productive ATP-binding to VbhT. The protein is Antitoxin VbhA of Bartonella schoenbuchensis (strain DSM 13525 / NCTC 13165 / R1).